We begin with the raw amino-acid sequence, 232 residues long: Large ribosomal subunit protein uL1 (232 aa).

This sequence belongs to the universal ribosomal protein uL1 family. In terms of assembly, part of the 50S ribosomal subunit.

Binds directly to 23S rRNA. The L1 stalk is quite mobile in the ribosome, and is involved in E site tRNA release. In terms of biological role, protein L1 is also a translational repressor protein, it controls the translation of the L11 operon by binding to its mRNA. The chain is Large ribosomal subunit protein uL1 from Sinorhizobium medicae (strain WSM419) (Ensifer medicae).